The sequence spans 378 residues: O-methyltransferase gsfD (378 aa).

S-adenosyl-L-methionine contacts are provided by residues 219–220, aspartate 244, 266–267, and arginine 282; these read GG and DM. Catalysis depends on histidine 286, which acts as the Proton acceptor.

It belongs to the class I-like SAM-binding methyltransferase superfamily. Cation-independent O-methyltransferase family.

It catalyses the reaction desmethyl-dehydrogriseofulvin + S-adenosyl-L-methionine = dehydrogriseofulvin + S-adenosyl-L-homocysteine + H(+). Its pathway is secondary metabolite biosynthesis; terpenoid biosynthesis. In terms of biological role, O-methyltransferase; part of the gene cluster that mediates the biosynthesis of griseofulvin, an important antifungal drug that has been in use for a long time for treating dermatophyte infections. The first step of the pathway is the formation of the heptaketide backbone by gsfA which is initiated by priming with acetyl-CoA, followed by sequential condensations of 6 malonyl-CoA units. The resulting benzophenone can undergo a spontaneous dehydration to form norlichexanthone. However, the true precursor for the griseofulvin biosynthesis is not norlichexanthone, but the heptaketide benzophenone that is O-methylated at 3-OH by gsfB to produce griseophenone D which is further methylated at 9-OH by gsfC to yield griseophenone C. Griseophenone C is then substrate of halogenase gsfI which is responsible for the regio-specific chlorination at the C13 position to form griseophenone B. The cytochrome P450 gsfF catalyzes the coupling of orcinol and phloroglucinol rings in griseophenone B to form desmethyl-dehydrogriseofulvin A which is further methylated at 5-OH by gsfD to yield dehydrogriseofulvin. Finally, gsfE performs stereospecific reduction of enone 18 of dehydrogriseofulvin to afford the final product griseofulvin. The sequence is that of O-methyltransferase gsfD from Penicillium aethiopicum.